The chain runs to 140 residues: MALERTFSIIKPDATRRNLTGKINAKFEEAGLRIVAQKRIHMTKAQAGVFYAVHAERPFYDELCEFMASAPVVVQVLEGEGAIAKNREVMGATNPADAAPGTIRAEFAESVGENSVHGSDAPETAAEEIAYFFSGMELVG.

Positions 11, 59, 87, 93, 104, and 114 each coordinate ATP. The active-site Pros-phosphohistidine intermediate is the His-117.

Belongs to the NDK family. In terms of assembly, homotetramer. The cofactor is Mg(2+).

It localises to the cytoplasm. The enzyme catalyses a 2'-deoxyribonucleoside 5'-diphosphate + ATP = a 2'-deoxyribonucleoside 5'-triphosphate + ADP. It catalyses the reaction a ribonucleoside 5'-diphosphate + ATP = a ribonucleoside 5'-triphosphate + ADP. Major role in the synthesis of nucleoside triphosphates other than ATP. The ATP gamma phosphate is transferred to the NDP beta phosphate via a ping-pong mechanism, using a phosphorylated active-site intermediate. This is Nucleoside diphosphate kinase from Roseobacter denitrificans (strain ATCC 33942 / OCh 114) (Erythrobacter sp. (strain OCh 114)).